Reading from the N-terminus, the 1009-residue chain is Glutamate receptor ionotropic, delta-2 (1009 aa).

Residues 1–23 form the signal peptide; that stretch reads MKVFPAVLFLITFWSLEWEPVLP. At 24-566 the chain is on the extracellular side; it reads DSIIHIGAIF…DMFACLAPFD (543 aa). N-linked (GlcNAc...) asparagine glycosylation is found at N293, N306, N390, and N426. The Ca(2+) site is built by E531, V534, and D535. Residues 567–587 traverse the membrane as a helical segment; sequence LSLWACIAGTVLLVGTLVYLL. At 588–635 the chain is on the cytoplasmic side; it reads NWLNPPRLPMGSVSSTTLYNSMWFVYGSFVQQGGEVPYTTLATRMMMG. Residues 636–656 form a helical membrane-spanning segment; the sequence is VWWLFALIVISSYTANLAAFL. The Extracellular segment spans residues 657–830; it reads TISRIENSIQ…KSGSALDIHS (174 aa). N-linked (GlcNAc...) asparagine glycosylation occurs at N713. D753, D755, and S757 together coordinate Ca(2+). The chain crosses the membrane as a helical span at residues 831-851; it reads FAGVFFVLAAGVVLSCLIATV. The Cytoplasmic portion of the chain corresponds to 852–1009; it reads ETWWTRRKGS…GNDPDRGTSI (158 aa). Residues 989–1009 are disordered; sequence YQPTPAPNFSYGNDPDRGTSI.

It belongs to the glutamate-gated ion channel (TC 1.A.10.1) family. GRID2 subfamily. Tetramer; dimer of dimers. As to expression, expressed in cerebellar Purkinje cells, in crest cells in the medial octavolateral nucleus and in type I neurons of the optic tectum.

The protein resides in the postsynaptic cell membrane. The catalysed reaction is Ca(2+)(in) = Ca(2+)(out). It carries out the reaction Na(+)(in) = Na(+)(out). In terms of biological role, member of the ionotropic glutamate receptor family, which plays a crucial role in synaptic organization and signal transduction in the central nervous system. Although it shares structural features with ionotropic glutamate receptors, does not bind glutamate as a primary ligand. Promotes synaptogenesis and mediates the D-Serine-dependent long term depression signals and AMPA receptor endocytosis of cerebellar parallel fiber-Purkinje cell (PF-PC) synapses through the NRX1B-CBLN1-GRID2 triad complex. In the presence of neurexins and cerebellins, forms cation-selective channels that are proposed to be gated by glycine and D-serine. However, recent research disputes this ligand-gated cation channel activity. Cation-selective ion channel activity can be triggered by GRM1 in Purkinje cells. This is Glutamate receptor ionotropic, delta-2 from Danio rerio (Zebrafish).